We begin with the raw amino-acid sequence, 105 residues long: MMLKPSIDTLLDKVPSKYSLVILQAKRAHELEAGATPTQEFKSVKSTLQALEEIESGNVVIHPDPSAKREAVRAKIEAERLAKEEEERKIKEQIAKEKEEEGEKI.

The protein belongs to the RNA polymerase subunit omega family. In terms of assembly, the RNAP catalytic core consists of 2 alpha, 1 beta, 1 beta' and 1 omega subunit. When a sigma factor is associated with the core the holoenzyme is formed, which can initiate transcription.

It carries out the reaction RNA(n) + a ribonucleoside 5'-triphosphate = RNA(n+1) + diphosphate. Promotes RNA polymerase assembly. Latches the N- and C-terminal regions of the beta' subunit thereby facilitating its interaction with the beta and alpha subunits. The polypeptide is DNA-directed RNA polymerase subunit omega (Streptococcus pyogenes serotype M12 (strain MGAS2096)).